Here is a 307-residue protein sequence, read N- to C-terminus: ATP synthase gamma chain (307 aa).

Belongs to the ATPase gamma chain family. In terms of assembly, F-type ATPases have 2 components, CF(1) - the catalytic core - and CF(0) - the membrane proton channel. CF(1) has five subunits: alpha(3), beta(3), gamma(1), delta(1), epsilon(1). CF(0) has three main subunits: a, b and c.

Its subcellular location is the cell membrane. Produces ATP from ADP in the presence of a proton gradient across the membrane. The gamma chain is believed to be important in regulating ATPase activity and the flow of protons through the CF(0) complex. This Bifidobacterium longum subsp. infantis (strain ATCC 15697 / DSM 20088 / JCM 1222 / NCTC 11817 / S12) protein is ATP synthase gamma chain.